The chain runs to 1562 residues: Neuralized-like protein 4 (1562 aa).

The span at 1–42 shows a compositional bias: gly residues; sequence MAAGSGGSGGSGGGPGPGPGGGGGPSGSGSGPGSNGGLGSGG. Disordered stretches follow at residues 1 to 48 and 207 to 236; these read MAAG…HPRT and PEPG…LAEQ. 2 consecutive NHR domains span residues 41 to 207 and 317 to 484; these read GGEL…VLPP and ALLF…IVHN. The segment covering 207-224 has biased composition (pro residues); sequence PEPGFSPPTPIPTPPLEP. At Ser502 the chain carries Phosphoserine. NHR domains follow at residues 520-686 and 716-884; these read RLLF…IVDD and DLRF…ITNA. A disordered region spans residues 691-716; that stretch reads PVPEPLPEGNNQVSPSSPSSGAGGSD. Ser907 is modified (phosphoserine). Residues 913–1086 enclose the NHR 5 domain; that stretch reads AHRFHSTCGK…PVRGVSIVSS (174 aa). The tract at residues 1086 to 1123 is disordered; the sequence is STRLEESEGTQPPSPSSDTGSEGEEDDEGEEHGLGGQN. Positions 1106–1115 are enriched in acidic residues; sequence SEGEEDDEGE. In terms of domain architecture, NHR 6 spans 1131 to 1294; the sequence is TLEFLENHGK…QCEQVTIVNP (164 aa).

In terms of assembly, interacts with CCP110; this interaction propmotes CCP110 ubiquitination and degradation via the proteasome pathway. Via its interaction with CCP110, may indirectly interact with CEP97. Interacts with the E3 ubiquitin-protein ligase HERC2 and UBE3A. May interact with MAPK6 and hence mediate MAPK6 interaction with UBE3A. Interaction with UBE3A may be indirect and mediated by HERC2. In terms of processing, ubiquitinated; undergoes HERC2-dependent 'Lys-48' ubiquitination. This ubiquitination leads to proteasomal degradation. In terms of tissue distribution, widely expressed at high levels (including brain).

The protein localises to the cytoplasm. It localises to the cytoskeleton. The protein resides in the microtubule organizing center. It is found in the centrosome. Its subcellular location is the centriole. Functionally, promotes CCP110 ubiquitination and proteasome-dependent degradation. By counteracting accumulation of CP110, maintains normal centriolar homeostasis and preventing formation of ectopic microtubular organizing centers. This Homo sapiens (Human) protein is Neuralized-like protein 4 (NEURL4).